The primary structure comprises 92 residues: UPF0223 protein SP_1404 (92 aa).

Belongs to the UPF0223 family.

The chain is UPF0223 protein SP_1404 from Streptococcus pneumoniae serotype 4 (strain ATCC BAA-334 / TIGR4).